Consider the following 206-residue polypeptide: Thiamine-phosphate synthase (206 aa).

4-amino-2-methyl-5-(diphosphooxymethyl)pyrimidine is bound by residues 33-37 (QMRFK) and asparagine 65. The Mg(2+) site is built by aspartate 66 and aspartate 85. Threonine 104 provides a ligand contact to 4-amino-2-methyl-5-(diphosphooxymethyl)pyrimidine. 130 to 132 (TAT) lines the 2-[(2R,5Z)-2-carboxy-4-methylthiazol-5(2H)-ylidene]ethyl phosphate pocket. Residue lysine 133 coordinates 4-amino-2-methyl-5-(diphosphooxymethyl)pyrimidine. Residue glycine 166 participates in 2-[(2R,5Z)-2-carboxy-4-methylthiazol-5(2H)-ylidene]ethyl phosphate binding.

The protein belongs to the thiamine-phosphate synthase family. Mg(2+) is required as a cofactor.

The enzyme catalyses 2-[(2R,5Z)-2-carboxy-4-methylthiazol-5(2H)-ylidene]ethyl phosphate + 4-amino-2-methyl-5-(diphosphooxymethyl)pyrimidine + 2 H(+) = thiamine phosphate + CO2 + diphosphate. The catalysed reaction is 2-(2-carboxy-4-methylthiazol-5-yl)ethyl phosphate + 4-amino-2-methyl-5-(diphosphooxymethyl)pyrimidine + 2 H(+) = thiamine phosphate + CO2 + diphosphate. It carries out the reaction 4-methyl-5-(2-phosphooxyethyl)-thiazole + 4-amino-2-methyl-5-(diphosphooxymethyl)pyrimidine + H(+) = thiamine phosphate + diphosphate. It functions in the pathway cofactor biosynthesis; thiamine diphosphate biosynthesis; thiamine phosphate from 4-amino-2-methyl-5-diphosphomethylpyrimidine and 4-methyl-5-(2-phosphoethyl)-thiazole: step 1/1. In terms of biological role, condenses 4-methyl-5-(beta-hydroxyethyl)thiazole monophosphate (THZ-P) and 2-methyl-4-amino-5-hydroxymethyl pyrimidine pyrophosphate (HMP-PP) to form thiamine monophosphate (TMP). This chain is Thiamine-phosphate synthase, found in Flavobacterium psychrophilum (strain ATCC 49511 / DSM 21280 / CIP 103535 / JIP02/86).